Here is a 334-residue protein sequence, read N- to C-terminus: MKVKVGINGYGTIGKRVAYAVTRQDDMKLIGVTKTKPDFEAYRAKELGIPVYAAGEEFLPRFENAGFEVAGTLSDLLEKVDVIVDATPGGMGAKNKAVYEKAGVKAIFQGGEKASTAEVSFVAQANYEKALGKDYVRVVSCNTTGLIRTLSAVQEYIDYVYAVMIRRAADPNDIKHGPINAIKPSVTVPSHHGPDVQTVIPINIETSAFVVPTTIMHVHSIMVELKKPLEAKDVIDIFENTTRVLLFEKEKGFESTAQLIEFARDLHREWNNLYEIAVWKESISVRGNRLFYIQAVHQESDVVPENIDAIRAMFEMADKWESIRKTNQSLGILK.

NAD(+) contacts are provided by residues 12-13 (TI) and G111. A D-glyceraldehyde 3-phosphate-binding site is contributed by 140–142 (SCN). C141 acts as the Nucleophile in catalysis. Residue R167 coordinates NAD(+). D-glyceraldehyde 3-phosphate is bound at residue 192–193 (HG). NAD(+) is bound at residue Q298.

The protein belongs to the glyceraldehyde-3-phosphate dehydrogenase family. As to quaternary structure, homotetramer.

The protein localises to the cytoplasm. The catalysed reaction is D-glyceraldehyde 3-phosphate + phosphate + NADP(+) = (2R)-3-phospho-glyceroyl phosphate + NADPH + H(+). It carries out the reaction D-glyceraldehyde 3-phosphate + phosphate + NAD(+) = (2R)-3-phospho-glyceroyl phosphate + NADH + H(+). It participates in carbohydrate degradation; glycolysis; pyruvate from D-glyceraldehyde 3-phosphate: step 1/5. This Thermococcus onnurineus (strain NA1) protein is Glyceraldehyde-3-phosphate dehydrogenase.